Consider the following 484-residue polypeptide: uncharacterized protein (484 aa).

Transmembrane regions (helical) follow at residues 19–39 (LSFG…MIFV), 78–98 (VNWG…WLIV), 111–131 (FFML…FIIL), 134–154 (IFAI…SNYL), 165–185 (FSPF…AGII), 199–219 (IVFL…IILG), 249–269 (TWYW…PFTF), 289–309 (ISVF…TIGL), 321–341 (ISTI…VFVL), 360–380 (LFLF…GVML), 398–418 (FGLI…ITSL), and 440–460 (LGAY…LALL).

The protein localises to the cell membrane. This is an uncharacterized protein from Mesomycoplasma hyopneumoniae (strain 232) (Mycoplasma hyopneumoniae).